The sequence spans 206 residues: Large ribosomal subunit protein uL4 (206 aa).

Positions 42–94 (RRQQGSHKAQGRGDVSRTGSKMYKQKGTGRARHHSARAPQFRGGGQAHGPVVR) are disordered. The segment covering 64-77 (YKQKGTGRARHHSA) has biased composition (basic residues).

Belongs to the universal ribosomal protein uL4 family. Part of the 50S ribosomal subunit.

In terms of biological role, one of the primary rRNA binding proteins, this protein initially binds near the 5'-end of the 23S rRNA. It is important during the early stages of 50S assembly. It makes multiple contacts with different domains of the 23S rRNA in the assembled 50S subunit and ribosome. Functionally, forms part of the polypeptide exit tunnel. The polypeptide is Large ribosomal subunit protein uL4 (Brucella abortus biovar 1 (strain 9-941)).